Here is a 419-residue protein sequence, read N- to C-terminus: MASNTSRSAHLAQIITENTANIETYRREQGLPPLSLGPDAPLDVKYPPNVEKCRRAVIDATLELGELATGPVELRLVPGWAIMTMFGVTQFICDFDIARQIPLAGDISYEDLSKAINVAVPVLRQVLRAGMPYHMFYESRPGHVAHTATTKVMASESLISDWTSLYTDVLFPASAGLSKALREEPTASDPSKTGFMVTKGDGESGMYMYFEKHPEEARRFAGVMEAFQKDEAYAVRHLTDSWPSDSQTGKLVDLGGSTGAVAFALAEKFPGLEIVVQDLPGALEAAHVREGKNVSFMPHDFFNEQPVKDADVYMFRWILHNWPDGHVQRILRALVPSLKPGAKVIVFDEIMPPAGTLPLSIERYQRNIDFGMLTLFNSKIRDIVEWKEIITQSDQRFNVTGVRYPENSRLSLIEIVWQP.

S-adenosyl-L-methionine is bound by residues 255 to 256 (GG), aspartate 278, 300 to 301 (DF), and arginine 316. Catalysis depends on histidine 320, which acts as the Proton acceptor.

Belongs to the class I-like SAM-binding methyltransferase superfamily. Cation-independent O-methyltransferase family.

It catalyses the reaction 2-(2,4-dihydroxy-6-oxidobenzoyl)-5-hydroxy-3-methylbenzenolate + S-adenosyl-L-methionine = griseophenone D + S-adenosyl-L-homocysteine + H(+). The protein operates within secondary metabolite biosynthesis; terpenoid biosynthesis. O-methyltransferase; part of the gene cluster that mediates the biosynthesis of griseofulvin, an important antifungal drug that has been in use for a long time for treating dermatophyte infections. The first step of the pathway is the formation of the heptaketide backbone by gsfA which is initiated by priming with acetyl-CoA, followed by sequential condensations of 6 malonyl-CoA units. The resulting benzophenone can undergo a spontaneous dehydration to form norlichexanthone. However, the true precursor for the griseofulvin biosynthesis is not norlichexanthone, but the heptaketide benzophenone that is O-methylated at 3-OH by gsfB to produce griseophenone D which is further methylated at 9-OH by gsfC to yield griseophenone C. Griseophenone C is then substrate of halogenase gsfI which is responsible for the regio-specific chlorination at the C13 position to form griseophenone B. The cytochrome P450 gsfF catalyzes the coupling of orcinol and phloroglucinol rings in griseophenone B to form desmethyl-dehydrogriseofulvin A which is further methylated at 5-OH by gsfD to yield dehydrogriseofulvin. Finally, gsfE performs stereospecific reduction of enone 18 of dehydrogriseofulvin to afford the final product griseofulvin. The protein is O-methyltransferase gsfB of Penicillium aethiopicum.